A 38-amino-acid polypeptide reads, in one-letter code: Large ribosomal subunit protein bL36 (38 aa).

This sequence belongs to the bacterial ribosomal protein bL36 family.

This Chloroherpeton thalassium (strain ATCC 35110 / GB-78) protein is Large ribosomal subunit protein bL36.